The primary structure comprises 421 residues: CinA-like protein (421 aa).

This sequence belongs to the CinA family.

The sequence is that of CinA-like protein from Synechococcus sp. (strain ATCC 27144 / PCC 6301 / SAUG 1402/1) (Anacystis nidulans).